The sequence spans 2206 residues: Genome polyprotein (2206 aa).

Residue Gly2 is the site of N-myristoyl glycine; by host attachment. The Cytoplasmic segment spans residues 2-1517; that stretch reads GAQVSSQKVG…NINRAMTILQ (1516 aa). Amphipathic alpha-helix regions lie at residues 579–599 and 579–603; these read GIEDLISEVAQGALTLSLPKQ and GIEDLISEVAQGALTLSLPKQQDSL. Residues His898 and Asp916 each act as for protease 2A activity in the active site. Zn(2+) contacts are provided by Cys933 and Cys935. Catalysis depends on Cys987, which acts as the For protease 2A activity. Positions 993 and 995 each coordinate Zn(2+). The segment at 1125–1197 is membrane-binding; sequence GDSWLKKFTE…HQSCPSQEHQ (73 aa). The oligomerization stretch occupies residues 1125-1263; it reads GDSWLKKFTE…SPGTGKSVAT (139 aa). Positions 1146–1150 are RNA-binding; sequence SNKIS. Residues 1229 to 1385 form the SF3 helicase domain; it reads EHTINNYIQF…GEYSRDGKLN (157 aa). 1253 to 1260 provides a ligand contact to ATP; sequence GSPGTGKS. The Zn(2+) site is built by Cys1393, Cys1396, Cys1405, and Cys1410. A C4-type zinc finger spans residues 1393–1410; sequence CKDCHQPANFKRCCPLVC. An RNA-binding region spans residues 1437–1444; sequence ERNRRSNI. The segment at 1448–1453 is oligomerization; that stretch reads MEALFQ. Residues 1518 to 1533 lie within the membrane without spanning it; that stretch reads AVTTFAAVAGVVYVMY. Topologically, residues 1534–2206 are cytoplasmic; that stretch reads KLFAGHQGAY…TLYRRWLDSF (673 aa). Tyr1543 is subject to O-(5'-phospho-RNA)-tyrosine. Residues 1563 to 1741 enclose the Peptidase C3 domain; the sequence is GPGFDYAVAM…FAAALKRSYF (179 aa). Residues His1602, Glu1633, and Cys1709 each act as for protease 3C activity in the active site. Residues 1972–2087 form the RdRp catalytic domain; that stretch reads EKLFAFDYTG…SYPHEVDASL (116 aa). Residues Asp1978 and Asp2073 each contribute to the Mg(2+) site.

It belongs to the picornaviruses polyprotein family. In terms of assembly, interacts with capsid protein VP1 and capsid protein VP3 to form heterotrimeric protomers. As to quaternary structure, interacts with capsid protein VP0, and capsid protein VP3 to form heterotrimeric protomers. Interacts with human PVR. Five protomers subsequently associate to form pentamers which serve as building blocks for the capsid. Interacts with capsid protein VP2, capsid protein VP3 and capsid protein VP4 following cleavage of capsid protein VP0. Interacts with capsid protein VP1 and capsid protein VP3 in the mature capsid. In terms of assembly, interacts with capsid protein VP0 and capsid protein VP1 to form heterotrimeric protomers. Five protomers subsequently associate to form pentamers which serve as building blocks for the capsid. Interacts with capsid protein VP4 in the mature capsid. Interacts with protein 2C; this interaction may be important for virion morphogenesis. As to quaternary structure, interacts with capsid protein VP1 and capsid protein VP3. Homodimer. In terms of assembly, homohexamer; forms a hexameric ring structure with 6-fold symmetry characteristic of AAA+ ATPases. Interacts (via N-terminus) with host RTN3 (via reticulon domain); this interaction is important for viral replication. Interacts with capsid protein VP3; this interaction may be important for virion morphogenesis. As to quaternary structure, interacts with protein 3CD. Homodimer. Interacts with host GBF1. Interacts (via GOLD domain) with host ACBD3 (via GOLD domain); this interaction allows the formation of a viral protein 3A/ACBD3 heterotetramer with a 2:2 stoichiometry, which will stimulate the recruitment of host PI4KB in order to synthesize PI4P at the viral RNA replication sites. In terms of assembly, interacts with RNA-directed RNA polymerase. As to quaternary structure, interacts with protein 3AB and with RNA-directed RNA polymerase. Interacts with Viral protein genome-linked and with protein 3CD. It depends on Mg(2+) as a cofactor. In terms of processing, specific enzymatic cleavages in vivo by the viral proteases yield processing intermediates and the mature proteins. Myristoylation is required for the formation of pentamers during virus assembly. Further assembly of 12 pentamers and a molecule of genomic RNA generates the provirion. Post-translationally, during virion maturation, immature virions are rendered infectious following cleavage of VP0 into VP4 and VP2. This maturation seems to be an autocatalytic event triggered by the presence of RNA in the capsid and it is followed by a conformational change infectious virion. In terms of processing, myristoylation is required during RNA encapsidation and formation of the mature virus particle. VPg is uridylylated by the polymerase into VPg-pUpU. This acts as a nucleotide-peptide primer for the genomic RNA replication.

It localises to the virion. The protein resides in the host cytoplasm. The protein localises to the host cytoplasmic vesicle membrane. It is found in the host nucleus. The enzyme catalyses a ribonucleoside 5'-triphosphate + H2O = a ribonucleoside 5'-diphosphate + phosphate + H(+). It catalyses the reaction Selective cleavage of Tyr-|-Gly bond in the picornavirus polyprotein.. It carries out the reaction RNA(n) + a ribonucleoside 5'-triphosphate = RNA(n+1) + diphosphate. The catalysed reaction is Selective cleavage of Gln-|-Gly bond in the poliovirus polyprotein. In other picornavirus reactions Glu may be substituted for Gln, and Ser or Thr for Gly.. With respect to regulation, replication or transcription is subject to high level of random mutations by the nucleotide analog ribavirin. In terms of biological role, forms an icosahedral capsid of pseudo T=3 symmetry with capsid proteins VP2 and VP3. The capsid is 300 Angstroms in diameter, composed of 60 copies of each capsid protein and enclosing the viral positive strand RNA genome. Capsid protein VP1 mainly forms the vertices of the capsid. Capsid protein VP1 interacts with host cell receptor PVR to provide virion attachment to target host cells. This attachment induces virion internalization predominantly through clathrin- and caveolin-independent endocytosis in Hela cells and through caveolin-mediated endocytosis in brain microvascular endothelial cells. Tyrosine kinases are probably involved in the entry process. Virus binding to PVR induces increased junctional permeability and rearrangement of junctional proteins. Modulation of endothelial tight junctions, as well as cytolytic infection of endothelial cells themselves, may result in loss of endothelial integrity which may help the virus to reach the CNS. After binding to its receptor, the capsid undergoes conformational changes. Capsid protein VP1 N-terminus (that contains an amphipathic alpha-helix) and capsid protein VP4 are externalized. Together, they shape a pore in the host membrane through which viral genome is translocated to host cell cytoplasm. Its function is as follows. Forms an icosahedral capsid of pseudo T=3 symmetry with capsid proteins VP2 and VP3. The capsid is 300 Angstroms in diameter, composed of 60 copies of each capsid protein and enclosing the viral positive strand RNA genome. Lies on the inner surface of the capsid shell. After binding to the host receptor, the capsid undergoes conformational changes. Capsid protein VP4 is released, Capsid protein VP1 N-terminus is externalized, and together, they shape a pore in the host membrane through which the viral genome is translocated into the host cell cytoplasm. Functionally, component of immature procapsids, which is cleaved into capsid proteins VP4 and VP2 after maturation. Allows the capsid to remain inactive before the maturation step. In terms of biological role, cysteine protease that cleaves viral polyprotein and specific host proteins. It is responsible for the autocatalytic cleavage between the P1 and P2 regions, which is the first cleavage occurring in the polyprotein. Also cleaves the host translation initiation factor EIF4G1, in order to shut down the capped cellular mRNA translation. Inhibits the host nucleus-cytoplasm protein and RNA trafficking by cleaving host members of the nuclear pores including NUP98, NUP62 and NUP153. Counteracts stress granule formation probably by antagonizing its assembly or promoting its dissassembly. Cleaves and inhibits host IFIH1/MDA5, thereby inhibiting the type-I IFN production and the establishment of the antiviral state. Cleaves and inhibits host MAVS, thereby inhibiting the type-I IFN production and the establishment of the antiviral state. Its function is as follows. Plays an essential role in the virus replication cycle by acting as a viroporin. Creates a pore in the host endoplasmic reticulum and as a consequence releases Ca2+ in the cytoplasm of infected cell. In turn, high levels of cytoplasmic calcium may trigger membrane trafficking and transport of viral ER-associated proteins to viroplasms, sites of viral genome replication. Induces and associates with structural rearrangements of intracellular membranes. Displays RNA-binding, nucleotide binding and NTPase activities. May play a role in virion morphogenesis and viral RNA encapsidation by interacting with the capsid protein VP3. Functionally, localizes the viral replication complex to the surface of membranous vesicles. Together with protein 3CD binds the Cis-Active RNA Element (CRE) which is involved in RNA synthesis initiation. Acts as a cofactor to stimulate the activity of 3D polymerase, maybe through a nucleid acid chaperone activity. In terms of biological role, localizes the viral replication complex to the surface of membranous vesicles. It inhibits host cell endoplasmic reticulum-to-Golgi apparatus transport and causes the disassembly of the Golgi complex, possibly through GBF1 interaction. This would result in depletion of MHC, trail receptors and IFN receptors at the host cell surface. Plays an essential role in viral RNA replication by recruiting ACBD3 and PI4KB at the viral replication sites, thereby allowing the formation of the rearranged membranous structures where viral replication takes place. Its function is as follows. Acts as a primer for viral RNA replication and remains covalently bound to viral genomic RNA. VPg is uridylylated prior to priming replication into VPg-pUpU. The oriI viral genomic sequence may act as a template for this. The VPg-pUpU is then used as primer on the genomic RNA poly(A) by the RNA-dependent RNA polymerase to replicate the viral genome. During genome replication, the VPg-RNA linkage is removed by the host TDP2, thereby accelerating replication. During the late stage of the replication cycle, host TDP2 is excluded from sites of viral RNA synthesis and encapsidation, allowing for the generation of progeny virions. Involved in the viral replication complex and viral polypeptide maturation. It exhibits protease activity with a specificity and catalytic efficiency that is different from protease 3C. Protein 3CD lacks polymerase activity. Protein 3CD binds to the 5'UTR of the viral genome. Functionally, major viral protease that mediates proteolytic processing of the polyprotein. Cleaves host EIF5B, contributing to host translation shutoff. Also cleaves host PABPC1, contributing to host translation shutoff. Cleaves host RIGI and thus contributes to the inhibition of type I interferon production. Cleaves host NLRP1, triggers host N-glycine-mediated degradation of the autoinhibitory NLRP1 N-terminal fragment. Inhibits the integrated stress response (ISR) in the infected cell by cleaving host G3BP1. Stress granule formation is thus inhibited, which allows protein synthesis and viral replication. In terms of biological role, replicates the viral genomic RNA on the surface of intracellular membranes. May form linear arrays of subunits that propagate along a strong head-to-tail interaction called interface-I. Covalently attaches UMP to a tyrosine of VPg, which is used to prime RNA synthesis. The positive stranded RNA genome is first replicated at virus induced membranous vesicles, creating a dsRNA genomic replication form. This dsRNA is then used as template to synthesize positive stranded RNA genomes. ss(+)RNA genomes are either translated, replicated or encapsidated. In Poliovirus type 3 (strains P3/Leon/37 and P3/Leon 12A[1]B), this protein is Genome polyprotein.